Reading from the N-terminus, the 218-residue chain is Cytochrome c biogenesis ATP-binding export protein CcmA (218 aa).

One can recognise an ABC transporter domain in the interval 2 to 217; it reads LEAKNLTCIR…KSCLSACCAV (216 aa). 34 to 41 contributes to the ATP binding site; the sequence is GPNGAGKT.

The protein belongs to the ABC transporter superfamily. CcmA exporter (TC 3.A.1.107) family. As to quaternary structure, the complex is composed of two ATP-binding proteins (CcmA) and two transmembrane proteins (CcmB).

The protein resides in the cell inner membrane. It carries out the reaction heme b(in) + ATP + H2O = heme b(out) + ADP + phosphate + H(+). Its function is as follows. Part of the ABC transporter complex CcmAB involved in the biogenesis of c-type cytochromes; once thought to export heme, this seems not to be the case, but its exact role is uncertain. Responsible for energy coupling to the transport system. This is Cytochrome c biogenesis ATP-binding export protein CcmA from Yersinia pseudotuberculosis serotype I (strain IP32953).